We begin with the raw amino-acid sequence, 260 residues long: Small ribosomal subunit protein uS3 (260 aa).

The KH type-2 domain maps to 39–114 (LRQYIEQKLG…QIRINVVEVQ (76 aa)). The segment at 217–260 (GQEPDPLPPASRDRERDPRDRDREPRRRQQQRRRQQFEDRSNEG) is disordered. 2 stretches are compositionally biased toward basic and acidic residues: residues 227-243 (SRDRERDPRDRDREPRR) and 251-260 (QQFEDRSNEG).

This sequence belongs to the universal ribosomal protein uS3 family. Part of the 30S ribosomal subunit. Forms a tight complex with proteins S10 and S14.

In terms of biological role, binds the lower part of the 30S subunit head. Binds mRNA in the 70S ribosome, positioning it for translation. In Nostoc punctiforme (strain ATCC 29133 / PCC 73102), this protein is Small ribosomal subunit protein uS3.